The chain runs to 185 residues: CASP-like protein 2C3 (185 aa).

Residues 1 to 13 (MAAAARVSEVKAE) lie on the Cytoplasmic side of the membrane. Residues 14 to 34 (GLLRGACAALAAAAALLVGLS) form a helical membrane-spanning segment. Topologically, residues 35–53 (TQTETVLLVRKKATVKDVQ) are extracellular. The helical transmembrane segment at 54–74 (ALWVLAMAAAAAAGYHLLQLL) threads the bilayer. At 75 to 104 (KCLYLGRVGGARPCRRSSRALAWTCLLLDK) the chain is on the cytoplasmic side. A helical transmembrane segment spans residues 105-125 (ACAYTTFATTVAAAQACVVAL). At 126-146 (DGAHAVQWTKLCNIYTRFCEQ) the chain is on the extracellular side. The chain crosses the membrane as a helical span at residues 147–167 (VAGSLVLGMLAAVGTAVLSAA). Over 168–185 (SARNVFRHYSSLETYAAH) the chain is Cytoplasmic.

The protein belongs to the Casparian strip membrane proteins (CASP) family. In terms of assembly, homodimer and heterodimers.

It localises to the cell membrane. This is CASP-like protein 2C3 from Zea mays (Maize).